We begin with the raw amino-acid sequence, 228 residues long: NAD(P)H-hydrate epimerase (228 aa).

The 201-residue stretch at 9–209 folds into the YjeF N-terminal domain; the sequence is VRAVERLAHR…LLGLTPAFLA (201 aa). Residue 53–57 coordinates (6S)-NADPHX; that stretch reads NNGGD. K(+) is bound by residues Asn54 and Asp115. (6S)-NADPHX-binding positions include 119–125 and Asp148; that span reads GIGLARP. Ser151 is a K(+) binding site.

It belongs to the NnrE/AIBP family. Requires K(+) as cofactor.

The catalysed reaction is (6R)-NADHX = (6S)-NADHX. It catalyses the reaction (6R)-NADPHX = (6S)-NADPHX. Functionally, catalyzes the epimerization of the S- and R-forms of NAD(P)HX, a damaged form of NAD(P)H that is a result of enzymatic or heat-dependent hydration. This is a prerequisite for the S-specific NAD(P)H-hydrate dehydratase to allow the repair of both epimers of NAD(P)HX. This is NAD(P)H-hydrate epimerase from Bordetella bronchiseptica (strain ATCC BAA-588 / NCTC 13252 / RB50) (Alcaligenes bronchisepticus).